The following is a 267-amino-acid chain: MIQKKTFIHPTSIVEKGAIVHEGAHIGPFCYIGSQVEIGSGTELKSHIVINGITKIGKNNVIYQFCSIGEVNQDLKYKGEFTRVEIGDSNLIRESVSIHRGTEQGEGVTCVGNHNLLMFNTHVAHDCLIGHHCILANSTTLGGHVEIHDHAVIGGLSAVHQFCKVGSYAMLAGCSAVVKHIPPFILAQGNHASLVGPNTVGLKRHFSEAKYKAILRAYQLLYKQGKSLEDAKLELAKLAELHPVVILLLNFLNQIDLNSDKNRGIVR.

The protein belongs to the transferase hexapeptide repeat family. LpxA subfamily. In terms of assembly, homotrimer.

It localises to the cytoplasm. It catalyses the reaction a (3R)-hydroxyacyl-[ACP] + UDP-N-acetyl-alpha-D-glucosamine = a UDP-3-O-[(3R)-3-hydroxyacyl]-N-acetyl-alpha-D-glucosamine + holo-[ACP]. It participates in glycolipid biosynthesis; lipid IV(A) biosynthesis; lipid IV(A) from (3R)-3-hydroxytetradecanoyl-[acyl-carrier-protein] and UDP-N-acetyl-alpha-D-glucosamine: step 1/6. Its function is as follows. Involved in the biosynthesis of lipid A, a phosphorylated glycolipid that anchors the lipopolysaccharide to the outer membrane of the cell. The chain is Acyl-[acyl-carrier-protein]--UDP-N-acetylglucosamine O-acyltransferase from Hamiltonella defensa subsp. Acyrthosiphon pisum (strain 5AT).